Consider the following 177-residue polypeptide: MIIYRDLFSGDELCSDTFPMKLVNDVVFEFTGKHVVRKLGEVTLEGANPSAEEFDEGTEEQMESGIDIVLNHQLMEMPMYQDIKIFKDWIKEYMKKLVEKMKSDGESEESISKFKKNMQEYVTSLLKKDRFKELQFFSGPGENAAEGQLAIVEYRQVSDTEQPIVMLIKQGLVVEKC.

The region spanning 1 to 177 (MIIYRDLFSG…IKQGLVVEKC (177 aa)) is the TCTP domain.

It belongs to the TCTP family.

The protein resides in the cytoplasm. Involved in calcium binding and microtubule stabilization. The chain is Translationally-controlled tumor protein homolog from Trichinella pseudospiralis (Parasitic roundworm).